Consider the following 1216-residue polypeptide: 1-phosphatidylinositol 4,5-bisphosphate phosphodiesterase beta-1 (1216 aa).

A lipid anchor (S-palmitoyl cysteine) is attached at C17. Residue S236 is modified to Phosphoserine. A PI-PLC X-box domain is found at 316 to 467 (EDMSQPLSHY…LMYKILVKNK (152 aa)). Catalysis depends on residues H331 and H378. S417 is subject to Phosphoserine. The interval 469 to 534 (KSHKSSEGSG…MDEGTAGSEA (66 aa)) is disordered. Residues 472 to 483 (KSSEGSGKKKLS) show a composition bias toward basic and acidic residues. Residues 491 to 501 (SDSSSVFEPSS) are compositionally biased toward low complexity. Residues 507–518 (ADTESDDDDDDD) are compositionally biased toward acidic residues. Position 509 is a phosphothreonine (T509). A phosphoserine mark is found at S511 and S582. One can recognise a PI-PLC Y-box domain in the interval 540-656 (MSNLVNYIQP…GYRLKPEFMR (117 aa)). The region spanning 656–784 (RRPDKHFDPF…CLRNERNQPL (129 aa)) is the C2 domain. Disordered regions lie at residues 834–891 (DEEE…VKAP), 933–993 (LVKR…IEQD), 1071–1095 (KMDK…EEEK), and 1172–1216 (KISE…DTPL). S887 is modified (phosphoserine; by PKC). Composition is skewed to basic and acidic residues over residues 941–951 (TTDLIKEHTTK) and 959–979 (YLRR…KKSE). Residues S978 and S987 each carry the phosphoserine modification. Positions 980 to 991 (PSSPDHVSSTIE) are enriched in polar residues. Positions 1075-1095 (KRQEKITEAKSKDKSQMEEEK) are enriched in basic and acidic residues. The span at 1187–1198 (TSDSGKLNQKPP) shows a compositional bias: polar residues. A phosphoserine mark is found at S1199 and S1200. Basic and acidic residues predominate over residues 1207 to 1216 (NPGKEFDTPL).

Interacts with DGKQ. Requires Ca(2+) as cofactor. In terms of processing, palmitoylated. Palmitoylation at Cys-17 by ZDHHC21 regulates the signaling activity of PLCB1 and the function of the endothelial barrier. Palmitoylation by ZDHHC21 is stimulated by inflammation.

It localises to the nucleus membrane. The protein localises to the cytoplasm. It carries out the reaction a 1,2-diacyl-sn-glycero-3-phospho-(1D-myo-inositol-4,5-bisphosphate) + H2O = 1D-myo-inositol 1,4,5-trisphosphate + a 1,2-diacyl-sn-glycerol + H(+). It catalyses the reaction a 1,2-diacyl-sn-glycero-3-phospho-(1D-myo-inositol) + H2O = 1D-myo-inositol 1-phosphate + a 1,2-diacyl-sn-glycerol + H(+). Functionally, catalyzes the hydrolysis of 1-phosphatidylinositol 4,5-bisphosphate into diacylglycerol (DAG) and inositol 1,4,5-trisphosphate (IP3) and mediates intracellular signaling downstream of G protein-coupled receptors. Regulates the function of the endothelial barrier. This Bos taurus (Bovine) protein is 1-phosphatidylinositol 4,5-bisphosphate phosphodiesterase beta-1 (PLCB1).